We begin with the raw amino-acid sequence, 508 residues long: Bifunctional purine biosynthesis protein PurH (508 aa).

The MGS-like domain occupies Met1–Val145.

The protein belongs to the PurH family.

It catalyses the reaction (6R)-10-formyltetrahydrofolate + 5-amino-1-(5-phospho-beta-D-ribosyl)imidazole-4-carboxamide = 5-formamido-1-(5-phospho-D-ribosyl)imidazole-4-carboxamide + (6S)-5,6,7,8-tetrahydrofolate. The catalysed reaction is IMP + H2O = 5-formamido-1-(5-phospho-D-ribosyl)imidazole-4-carboxamide. It participates in purine metabolism; IMP biosynthesis via de novo pathway; 5-formamido-1-(5-phospho-D-ribosyl)imidazole-4-carboxamide from 5-amino-1-(5-phospho-D-ribosyl)imidazole-4-carboxamide (10-formyl THF route): step 1/1. Its pathway is purine metabolism; IMP biosynthesis via de novo pathway; IMP from 5-formamido-1-(5-phospho-D-ribosyl)imidazole-4-carboxamide: step 1/1. In Petrotoga mobilis (strain DSM 10674 / SJ95), this protein is Bifunctional purine biosynthesis protein PurH.